We begin with the raw amino-acid sequence, 545 residues long: CTP synthase (545 aa).

Positions 1-266 (MTTRYIFVTG…DDLVTKRFGL (266 aa)) are amidoligase domain. Serine 14 is a CTP binding site. UTP is bound at residue serine 14. ATP-binding positions include 15-20 (SLGKGI) and aspartate 72. Mg(2+) is bound by residues aspartate 72 and glutamate 140. Residues 147 to 149 (DIE), 187 to 192 (KTKPTQ), and lysine 223 each bind CTP. UTP is bound by residues 187–192 (KTKPTQ) and lysine 223. 239-241 (KDV) is a binding site for ATP. The Glutamine amidotransferase type-1 domain occupies 291-542 (TIGMVGKYTE…VAAAVAYQKR (252 aa)). L-glutamine is bound at residue glycine 352. The active-site Nucleophile; for glutamine hydrolysis is the cysteine 379. Residues 380-383 (LGMQ), glutamate 403, and arginine 470 contribute to the L-glutamine site. Catalysis depends on residues histidine 515 and glutamate 517.

It belongs to the CTP synthase family. As to quaternary structure, homotetramer.

The enzyme catalyses UTP + L-glutamine + ATP + H2O = CTP + L-glutamate + ADP + phosphate + 2 H(+). The catalysed reaction is L-glutamine + H2O = L-glutamate + NH4(+). It carries out the reaction UTP + NH4(+) + ATP = CTP + ADP + phosphate + 2 H(+). It participates in pyrimidine metabolism; CTP biosynthesis via de novo pathway; CTP from UDP: step 2/2. Allosterically activated by GTP, when glutamine is the substrate; GTP has no effect on the reaction when ammonia is the substrate. The allosteric effector GTP functions by stabilizing the protein conformation that binds the tetrahedral intermediate(s) formed during glutamine hydrolysis. Inhibited by the product CTP, via allosteric rather than competitive inhibition. Its function is as follows. Catalyzes the ATP-dependent amination of UTP to CTP with either L-glutamine or ammonia as the source of nitrogen. Regulates intracellular CTP levels through interactions with the four ribonucleotide triphosphates. This Shewanella loihica (strain ATCC BAA-1088 / PV-4) protein is CTP synthase.